The sequence spans 467 residues: ATP synthase subunit beta (467 aa).

Residue 150–157 coordinates ATP; sequence GGAGVGKT.

The protein belongs to the ATPase alpha/beta chains family. As to quaternary structure, F-type ATPases have 2 components, CF(1) - the catalytic core - and CF(0) - the membrane proton channel. CF(1) has five subunits: alpha(3), beta(3), gamma(1), delta(1), epsilon(1). CF(0) has three main subunits: a(1), b(2) and c(9-12). The alpha and beta chains form an alternating ring which encloses part of the gamma chain. CF(1) is attached to CF(0) by a central stalk formed by the gamma and epsilon chains, while a peripheral stalk is formed by the delta and b chains.

Its subcellular location is the cell inner membrane. The enzyme catalyses ATP + H2O + 4 H(+)(in) = ADP + phosphate + 5 H(+)(out). Its function is as follows. Produces ATP from ADP in the presence of a proton gradient across the membrane. The catalytic sites are hosted primarily by the beta subunits. This chain is ATP synthase subunit beta, found in Vibrio alginolyticus.